We begin with the raw amino-acid sequence, 360 residues long: BLOC-1-related complex subunit 6 (360 aa).

The tract at residues 1 to 201 is disordered; sequence MEAAQGRLGP…TGAGGGRRAT (201 aa). Residues 23 to 33 are compositionally biased toward polar residues; the sequence is ATFSGRPSRTP. Position 41 is a phosphothreonine (Thr-41). The residue at position 130 (Ser-130) is a Phosphoserine. The segment covering 144–155 has biased composition (acidic residues); it reads EGDDDDDEDEEA. Phosphoserine is present on Ser-173. Gly residues predominate over residues 179–198; the sequence is GACGGGGSSSSGETGAGGGR. Thr-201 is modified (phosphothreonine). Ser-204 is modified (phosphoserine).

The protein belongs to the BORCS6 family. Component of the BLOC-one-related complex (BORC) which is composed of BLOC1S1, BLOC1S2, BORCS5, BORCS6, BORCS7, BORCS8, KXD1 and SNAPIN.

It localises to the lysosome membrane. In terms of biological role, as part of the BORC complex may play a role in lysosomes movement and localization at the cell periphery. Associated with the cytosolic face of lysosomes, the BORC complex may recruit ARL8B and couple lysosomes to microtubule plus-end-directed kinesin motor. This chain is BLOC-1-related complex subunit 6, found in Mus musculus (Mouse).